We begin with the raw amino-acid sequence, 504 residues long: MTPSPLLLLLLPPLLLGAFPPAAAARGPPKMADKVVPRQVARLGRTVRLQCPVEGDPPPLTMWTKDGRTIHSGWSRFRVLPQGLKVKQVEREDAGVYVCKATNGFGSLSVNYTLVVLDDISPGKESLGPDSSSGGQEDPASQQWARPRFTQPSKMRRRVIARPVGSSVRLKCVASGHPRPDITWMKDDQALTRPEAAEPRKKKWTLSLKNLRPEDSGKYTCRVSNRAGAINATYKVDVIQRTRSKPVLTGTHPVNTTVDFGGTTSFQCKVRSDVKPVIQWLKRVEYGAEGRHNSTIDVGGQKFVVLPTGDVWSRPDGSYLNKLLITRARQDDAGMYICLGANTMGYSFRSAFLTVLPDPKPPGPPVASSSSATSLPWPVVIGIPAGAVFILGTLLLWLCQAQKKPCTPAPAPPLPGHRPPGTARDRSGDKDLPSLAALSAGPGVGLCEEHGSPAAPQHLLGPGPVAGPKLYPKLYTDIHTHTHTHSHTHSHVEGKVHQHIHYQC.

The N-terminal stretch at 1–24 (MTPSPLLLLLLPPLLLGAFPPAAA) is a signal peptide. The Extracellular segment spans residues 25 to 378 (ARGPPKMADK…SSSATSLPWP (354 aa)). Residues 29–115 (PKMADKVVPR…GSLSVNYTLV (87 aa)) form the Ig-like C2-type 1 domain. A disulfide bridge links cysteine 51 with cysteine 99. Asparagine 111 is a glycosylation site (N-linked (GlcNAc...) asparagine). Positions 123-155 (GKESLGPDSSSGGQEDPASQQWARPRFTQPSKM) are disordered. The span at 129–144 (PDSSSGGQEDPASQQW) shows a compositional bias: polar residues. 2 Ig-like C2-type domains span residues 147–237 (PRFT…YKVD) and 246–354 (PVLT…AFLT). The cysteines at positions 172 and 221 are disulfide-linked. N-linked (GlcNAc...) asparagine glycans are attached at residues asparagine 231, asparagine 255, and asparagine 293. Cysteine 268 and cysteine 338 are oxidised to a cystine. Residues 379 to 399 (VVIGIPAGAVFILGTLLLWLC) traverse the membrane as a helical segment. Topologically, residues 400 to 504 (QAQKKPCTPA…KVHQHIHYQC (105 aa)) are cytoplasmic. Residues 407-418 (TPAPAPPLPGHR) are compositionally biased toward pro residues. The disordered stretch occupies residues 407–435 (TPAPAPPLPGHRPPGTARDRSGDKDLPSL). Basic and acidic residues predominate over residues 423 to 432 (ARDRSGDKDL).

As to quaternary structure, interacts with FGF2 with a low affinity. As to expression, expressed preferentially in cartilaginous tissues and pancreas. Highly expressed in the liver, kidney, heart, brain and skeletal muscle. Weakly expressed in the lung, small intestine and spleen.

Its subcellular location is the membrane. Functionally, has a negative effect on cell proliferation. The polypeptide is Fibroblast growth factor receptor-like 1 (FGFRL1) (Homo sapiens (Human)).